Here is a 578-residue protein sequence, read N- to C-terminus: L-2,3-diaminopropanoate--citrate ligase (578 aa).

This sequence belongs to the IucA/IucC family. In terms of assembly, forms a mixture of monomer and dimer in solution.

It carries out the reaction (S)-2,3-diaminopropanoate + citrate + ATP = 2-[(L-alanin-3-ylcarbamoyl)methyl]-2-hydroxybutanedioate + AMP + diphosphate. The protein operates within siderophore biosynthesis. Functionally, catalyzes the synthesis of citryl-L-2,3-diaminopropionic acid from L-2,3-diaminopropionic acid (L-Dap) and citrate, the first step in staphyloferrin B biosynthesis. This is L-2,3-diaminopropanoate--citrate ligase from Staphylococcus aureus (strain NCTC 8325 / PS 47).